The sequence spans 517 residues: Crotonobetaine/carnitine--CoA ligase (517 aa).

It belongs to the ATP-dependent AMP-binding enzyme family.

It carries out the reaction 4-(trimethylamino)butanoate + ATP + CoA = 4-(trimethylamino)butanoyl-CoA + AMP + diphosphate. It catalyses the reaction crotonobetaine + ATP + CoA = crotonobetainyl-CoA + AMP + diphosphate. The catalysed reaction is (R)-carnitine + ATP + CoA = (R)-carnitinyl-CoA + AMP + diphosphate. Its pathway is amine and polyamine metabolism; carnitine metabolism. In terms of biological role, catalyzes the transfer of CoA to carnitine, generating the initial carnitinyl-CoA needed for the CaiB reaction cycle. Also has activity toward crotonobetaine and gamma-butyrobetaine. This Shigella dysenteriae serotype 1 (strain Sd197) protein is Crotonobetaine/carnitine--CoA ligase.